Reading from the N-terminus, the 257-residue chain is Acetylglutamate kinase (257 aa).

Substrate-binding positions include 43-44 (GG), arginine 65, and asparagine 157. Residues 180-185 (DVSGIL) and 208-210 (IIT) contribute to the ATP site.

It belongs to the acetylglutamate kinase family. ArgB subfamily. Homodimer.

It localises to the cytoplasm. It catalyses the reaction N-acetyl-L-glutamate + ATP = N-acetyl-L-glutamyl 5-phosphate + ADP. It functions in the pathway amino-acid biosynthesis; L-arginine biosynthesis; N(2)-acetyl-L-ornithine from L-glutamate: step 2/4. Catalyzes the ATP-dependent phosphorylation of N-acetyl-L-glutamate. The polypeptide is Acetylglutamate kinase (Enterobacter sp. (strain 638)).